A 315-amino-acid polypeptide reads, in one-letter code: Acetaldehyde dehydrogenase 2 (315 aa).

11-14 (SGNI) provides a ligand contact to NAD(+). Catalysis depends on Cys-129, which acts as the Acyl-thioester intermediate. NAD(+) contacts are provided by residues 160–168 (SAGPGTRSN) and Asn-290.

The protein belongs to the acetaldehyde dehydrogenase family.

The enzyme catalyses acetaldehyde + NAD(+) + CoA = acetyl-CoA + NADH + H(+). The chain is Acetaldehyde dehydrogenase 2 from Mycobacterium sp. (strain KMS).